A 3381-amino-acid chain; its full sequence is Versican core protein (3381 aa).

A signal peptide spans 1-20 (MLINIKSILWMCSTLIAAHA). In terms of domain architecture, Ig-like V-type spans 21–147 (LQKVNMEKSP…EDTQDTVSLT (127 aa)). 5 disulfide bridges follow: C44/C131, C173/C244, C197/C218, C271/C346, and C295/C316. An N-linked (GlcNAc...) asparagine glycan is attached at N57. Link domains lie at 151 to 246 (VVFH…YCYV) and 252 to 348 (DVFH…YCFK). N331 and N352 each carry an N-linked (GlcNAc...) asparagine glycan. The segment at 349-1336 (PKQNISEATT…IIEVRENKTG (988 aa)) is GAG-alpha (glucosaminoglycan attachment domain). Residues 417–427 (PLTSTHRSATE) are compositionally biased toward polar residues. Disordered stretches follow at residues 417 to 437 (PLTS…SMKK) and 603 to 623 (ESVS…MDHR). S660 carries O-linked (Xyl...) (chondroitin sulfate) serine glycosylation. The tract at residues 816-866 (DNTTSKPLGSTEHVGSPKLPPALITTTGVSGKDKEMPSLTEDGRDEFTRIP) is disordered. N-linked (GlcNAc...) asparagine glycosylation occurs at N817. Residues 846 to 863 (GKDKEMPSLTEDGRDEFT) are compositionally biased toward basic and acidic residues. 2 N-linked (GlcNAc...) asparagine glycosylation sites follow: N965 and N1017. Positions 1043–1052 (EDFLWKEQTP) are enriched in basic and acidic residues. Disordered stretches follow at residues 1043-1081 (EDFL…SDGS) and 1218-1244 (FSSA…PDEE). N1333 is a glycosylation site (N-linked (GlcNAc...) asparagine). The tract at residues 1337-3074 (RMSDFSVSGH…VEGTAVYLPG (1738 aa)) is GAG-beta. Positions 1338–1362 (MSDFSVSGHPIDSESKEDEPCSEET) are disordered. Residues 1352-1362 (SKEDEPCSEET) show a composition bias toward acidic residues. A glycan (N-linked (GlcNAc...) asparagine) is linked at N1393. Residues 1417–1428 (KDPEAAEARRGQ) show a composition bias toward basic and acidic residues. Disordered stretches follow at residues 1417–1446 (KDPE…ESDS), 1455–1474 (GLPT…SLEI), and 1484–1512 (TAEP…GPDS). 2 N-linked (GlcNAc...) asparagine glycosylation sites follow: N1437 and N1463. O-linked (Xyl...) (chondroitin sulfate) serine glycans are attached at residues S1539 and S1621. Residue N1653 is glycosylated (N-linked (GlcNAc...) asparagine). Residues 1708-1785 (PPLEETTRKE…ERETTSSTVV (78 aa)) form a disordered region. Residues 1712–1721 (ETTRKEEEKG) show a composition bias toward basic and acidic residues. Positions 1726-1738 (ASTVEVHSPTQRL) are enriched in polar residues. A compositionally biased stretch (low complexity) spans 1743-1761 (SPSELESSSETPPDDSAAA). Polar residues predominate over residues 1764 to 1784 (KSFTSQMTPTQSERETTSSTV). O-linked (Xyl...) (chondroitin sulfate) serine glycosylation is found at S1928 and S1952. A compositionally biased stretch (polar residues) spans 1964–1976 (PSVTPTSDLSNHT). Disordered regions lie at residues 1964–1986 (PSVT…GSTL) and 2041–2126 (EGAI…QSSV). 4 N-linked (GlcNAc...) asparagine glycosylation sites follow: N1974, N2045, N2074, and N2103. The span at 2065–2075 (STEEGEVKENH) shows a compositional bias: basic and acidic residues. S2109 is subject to Phosphoserine. Residues S2240 and S2247 are each glycosylated (O-linked (Xyl...) (chondroitin sulfate) serine). N2263, N2290, and N2356 each carry an N-linked (GlcNAc...) asparagine glycan. Disordered regions lie at residues 2338–2388 (EGPF…AETK), 2490–2512 (EQRE…EKAT), and 2594–2615 (TDLD…TQVQ). 2 stretches are compositionally biased toward polar residues: residues 2345–2357 (LTFS…PQNQ) and 2367–2383 (TSRP…ENSV). Phosphoserine occurs at positions 2607 and 2608. T2612 bears the Phosphothreonine mark. N-linked (GlcNAc...) asparagine glycans are attached at residues N2623 and N2641. S2714, S2715, and S2759 each carry an O-linked (Xyl...) (chondroitin sulfate) serine glycan. The interval 2819-2893 (PPLSIHLGSG…EPSEDESKPK (75 aa)) is disordered. A compositionally biased stretch (polar residues) spans 2840–2851 (ALPSTDASTPPV). N2919 and N3052 each carry an N-linked (GlcNAc...) asparagine glycan. In terms of domain architecture, EGF-like 1 spans 3074-3110 (GPDRCKMNPCLNGGTCYPTETSYVCTCVPGYSGDRCE). Cystine bridges form between C3078–C3089, C3083–C3098, C3100–C3109, C3116–C3127, C3121–C3136, C3138–C3147, C3154–C3165, C3182–C3274, C3250–C3266, C3281–C3324, and C3310–C3337. The EGF-like 2; calcium-binding domain occupies 3112–3148 (DFDECHSNPCRNGATCIDGFNTFRCLCLPSYVGALCE). A C-type lectin domain is found at 3161–3275 (FQGQCYKYFA…CNYHLTYTCK (115 aa)). In terms of domain architecture, Sushi spans 3279 to 3339 (VACGQPPVVE…WAMPKITCLN (61 aa)). 2 N-linked (GlcNAc...) asparagine glycosylation sites follow: N3354 and N3364. The span at 3355–3365 (SSSAKDNSINT) shows a compositional bias: polar residues. The disordered stretch occupies residues 3355-3381 (SSSAKDNSINTSKHDHRWSRRWQESRR).

The protein belongs to the aggrecan/versican proteoglycan family. In terms of assembly, interacts with FBLN1. Phosphorylated by FAM20C in the extracellular medium. Post-translationally, proteolytically cleaved by ADAMTS5 and ADAMTS15 in the pericellular matrix surrounding myoblasts, facilitating myoblast contact and fusion which is required for skeletal muscle development and regeneration. Cerebral white matter. Isoform V0 and isoform V1 are expressed in the central nervous system, and in a number of mesenchymal and epithelial tissues; the major isoform V2 is restricted to the central nervous system.

Its subcellular location is the secreted. The protein resides in the extracellular space. The protein localises to the extracellular matrix. It is found in the cell projection. It localises to the cilium. Its subcellular location is the photoreceptor outer segment. The protein resides in the interphotoreceptor matrix. Its function is as follows. May play a role in intercellular signaling and in connecting cells with the extracellular matrix. May take part in the regulation of cell motility, growth and differentiation. Binds hyaluronic acid. This Bos taurus (Bovine) protein is Versican core protein (VCAN).